An 862-amino-acid polypeptide reads, in one-letter code: Linoleate 9S-lipoxygenase 1 (862 aa).

One can recognise a PLAT domain in the interval 44–171 (FGAATDIVGG…SYKRDRIFFA (128 aa)). The Lipoxygenase domain occupies 174 to 862 (TYLPNETPAS…FRGIPNSISI (689 aa)). Positions 225 to 257 (KNLARTTLGGSSDFPYPRRGRTGRKSTRKDPKC) are disordered. The span at 242–251 (RRGRTGRKST) shows a compositional bias: basic residues. Fe cation is bound by residues His-522, His-527, His-713, Asn-717, and Ile-862.

It belongs to the lipoxygenase family. Monomer. It depends on Fe cation as a cofactor.

The protein localises to the cytoplasm. It catalyses the reaction (9Z,12Z)-octadecadienoate + O2 = (13S)-hydroperoxy-(9Z,11E)-octadecadienoate. The enzyme catalyses (9Z,12Z,15Z)-octadecatrienoate + O2 = (13S)-hydroperoxy-(9Z,11E,15Z)-octadecatrienoate. It carries out the reaction (9Z,12Z)-octadecadienoate + O2 = (9S)-hydroperoxy-(10E,12Z)-octadecadienoate. It participates in lipid metabolism; oxylipin biosynthesis. Functionally, plant lipoxygenase may be involved in a number of diverse aspects of plant physiology including growth and development, pest resistance, and senescence or responses to wounding. It catalyzes the hydroperoxidation of lipids containing a cis,cis-1,4-pentadiene structure. This chain is Linoleate 9S-lipoxygenase 1 (LOXA), found in Phaseolus vulgaris (Kidney bean).